Consider the following 364-residue polypeptide: Myeloid cell surface antigen CD33 (364 aa).

Positions Met1–Met17 are cleaved as a signal peptide. Residues Asp18 to His259 lie on the Extracellular side of the membrane. The region spanning Pro19–Ser135 is the Ig-like V-type domain. 3 cysteine pairs are disulfide-bonded: Cys36-Cys169, Cys41-Cys101, and Cys163-Cys212. 2 N-linked (GlcNAc...) asparagine glycosylation sites follow: Asn100 and Asn113. Arg119 provides a ligand contact to N-acetylneuraminate. Residues Pro145 to Gln228 enclose the Ig-like C2-type domain. D-galactose is bound at residue Glu154. N-linked (GlcNAc...) asparagine glycosylation is found at Asn160, Asn209, and Asn230. Residues Gly260–Val282 traverse the membrane as a helical segment. The Cytoplasmic portion of the chain corresponds to Lys283–Gln364. The interval Ala290–Gln364 is disordered. 2 short sequence motifs (ITIM motif) span residues Leu338–Leu343 and Thr356–Val361. Phosphotyrosine; by LCK occurs at positions 340 and 358.

It belongs to the immunoglobulin superfamily. SIGLEC (sialic acid binding Ig-like lectin) family. As to quaternary structure, homodimer; disulfide-linked. Interacts with PTPN6/SHP-1 and PTPN11/SHP-2 upon phosphorylation. Interacts with C1QA (via C-terminus); this interaction activates CD33 inhibitory motifs. Glycosylated. Glycosylation at Asn-100 is critical for regulating ligand recognition. Post-translationally, phosphorylation of Tyr-340 is involved in binding to PTPN6 and PTPN11. Phosphorylation of Tyr-358 is involved in binding to PTPN6. LCK phosphorylates Tyr-340 efficiently and Tyr-358 to a lesser extent. As to expression, monocytic/myeloid lineage cells. In the brain, CD33 is mainly expressed on microglial cells.

It is found in the cell membrane. The protein resides in the peroxisome. Functionally, sialic-acid-binding immunoglobulin-like lectin (Siglec) that plays a role in mediating cell-cell interactions and in maintaining immune cells in a resting state. Preferentially recognizes and binds alpha-2,3- and more avidly alpha-2,6-linked sialic acid-bearing glycans. Upon engagement of ligands such as C1q or syalylated glycoproteins, two immunoreceptor tyrosine-based inhibitory motifs (ITIMs) located in CD33 cytoplasmic tail are phosphorylated by Src-like kinases such as LCK. These phosphorylations provide docking sites for the recruitment and activation of protein-tyrosine phosphatases PTPN6/SHP-1 and PTPN11/SHP-2. In turn, these phosphatases regulate downstream pathways through dephosphorylation of signaling molecules. One of the repressive effect of CD33 on monocyte activation requires phosphoinositide 3-kinase/PI3K. The protein is Myeloid cell surface antigen CD33 (CD33) of Homo sapiens (Human).